The following is a 177-amino-acid chain: Large ribosomal subunit protein uL6 (177 aa).

Belongs to the universal ribosomal protein uL6 family. As to quaternary structure, part of the 50S ribosomal subunit.

Functionally, this protein binds to the 23S rRNA, and is important in its secondary structure. It is located near the subunit interface in the base of the L7/L12 stalk, and near the tRNA binding site of the peptidyltransferase center. The polypeptide is Large ribosomal subunit protein uL6 (Salmonella dublin (strain CT_02021853)).